Reading from the N-terminus, the 1083-residue chain is Error-prone DNA polymerase (1083 aa).

Belongs to the DNA polymerase type-C family. DnaE2 subfamily.

Its subcellular location is the cytoplasm. It catalyses the reaction DNA(n) + a 2'-deoxyribonucleoside 5'-triphosphate = DNA(n+1) + diphosphate. In terms of biological role, DNA polymerase involved in damage-induced mutagenesis and translesion synthesis (TLS). It is not the major replicative DNA polymerase. The chain is Error-prone DNA polymerase from Xanthomonas oryzae pv. oryzae (strain KACC10331 / KXO85).